We begin with the raw amino-acid sequence, 194 residues long: ATP-dependent Clp protease proteolytic subunit (194 aa).

Catalysis depends on serine 98, which acts as the Nucleophile. The active site involves histidine 123.

Belongs to the peptidase S14 family. Fourteen ClpP subunits assemble into 2 heptameric rings which stack back to back to give a disk-like structure with a central cavity, resembling the structure of eukaryotic proteasomes.

The protein resides in the cytoplasm. It carries out the reaction Hydrolysis of proteins to small peptides in the presence of ATP and magnesium. alpha-casein is the usual test substrate. In the absence of ATP, only oligopeptides shorter than five residues are hydrolyzed (such as succinyl-Leu-Tyr-|-NHMec, and Leu-Tyr-Leu-|-Tyr-Trp, in which cleavage of the -Tyr-|-Leu- and -Tyr-|-Trp bonds also occurs).. Cleaves peptides in various proteins in a process that requires ATP hydrolysis. Has a chymotrypsin-like activity. Plays a major role in the degradation of misfolded proteins. This is ATP-dependent Clp protease proteolytic subunit from Actinobacillus succinogenes (strain ATCC 55618 / DSM 22257 / CCUG 43843 / 130Z).